A 319-amino-acid chain; its full sequence is Iron-sulfur cluster transfer protein NUBPL (319 aa).

The transit peptide at 1–38 (MGTWRRLLLFGGVSLRGGGAATVPPRGCRALGCGRQLL) directs the protein to the mitochondrion. Position 75-82 (75-82 (GKGGVGKS)) interacts with ATP.

This sequence belongs to the Mrp/NBP35 ATP-binding proteins family. [4Fe-4S] cluster is required as a cofactor.

The protein localises to the mitochondrion. In terms of biological role, iron-sulfur cluster transfer protein involved in the assembly of the mitochondrial membrane respiratory chain NADH dehydrogenase (Complex I). May deliver one or more Fe-S clusters to complex I subunits. The protein is Iron-sulfur cluster transfer protein NUBPL (Nubpl) of Mus musculus (Mouse).